The sequence spans 291 residues: Beta-lactamase Toho-1 (291 aa).

An N-terminal signal peptide occupies residues 1–29 (MMTQSIRRSMLTVMATLPLLFSSATLHAQ). Residue serine 73 is the Acyl-ester intermediate of the active site. Residue 237–239 (KTG) coordinates substrate.

This sequence belongs to the class-A beta-lactamase family. In terms of assembly, monomer.

It catalyses the reaction a beta-lactam + H2O = a substituted beta-amino acid. Functionally, has strong cefotaxime-hydrolyzing activity. This is Beta-lactamase Toho-1 (bla) from Escherichia coli.